Consider the following 145-residue polypeptide: Ribosome-binding factor A (145 aa).

The segment covering 122–132 has biased composition (basic and acidic residues); the sequence is KVQRDLESAPR. Residues 122–145 are disordered; the sequence is KVQRDLESAPREDDEGEPDSSSRD.

Belongs to the RbfA family. Monomer. Binds 30S ribosomal subunits, but not 50S ribosomal subunits or 70S ribosomes.

Its subcellular location is the cytoplasm. Its function is as follows. One of several proteins that assist in the late maturation steps of the functional core of the 30S ribosomal subunit. Associates with free 30S ribosomal subunits (but not with 30S subunits that are part of 70S ribosomes or polysomes). Required for efficient processing of 16S rRNA. May interact with the 5'-terminal helix region of 16S rRNA. The protein is Ribosome-binding factor A of Methylorubrum extorquens (strain PA1) (Methylobacterium extorquens).